A 307-amino-acid chain; its full sequence is tRNA pseudouridine synthase B (307 aa).

The active-site Nucleophile is Asp-39.

It belongs to the pseudouridine synthase TruB family. Type 1 subfamily.

It catalyses the reaction uridine(55) in tRNA = pseudouridine(55) in tRNA. Functionally, responsible for synthesis of pseudouridine from uracil-55 in the psi GC loop of transfer RNAs. The polypeptide is tRNA pseudouridine synthase B (Lactiplantibacillus plantarum (strain ATCC BAA-793 / NCIMB 8826 / WCFS1) (Lactobacillus plantarum)).